The primary structure comprises 224 residues: uncharacterized protein (224 aa).

The N-terminal stretch at methionine 1–alanine 19 is a signal peptide.

It belongs to the periplasmic pilus chaperone family.

The protein localises to the periplasm. Functionally, could be required for the biogenesis of a putative fimbria. This is an uncharacterized protein from Escherichia coli (strain K12).